A 154-amino-acid chain; its full sequence is Endoribonuclease YbeY (154 aa).

3 residues coordinate Zn(2+): His-118, His-122, and His-128.

The protein belongs to the endoribonuclease YbeY family. The cofactor is Zn(2+).

The protein localises to the cytoplasm. Its function is as follows. Single strand-specific metallo-endoribonuclease involved in late-stage 70S ribosome quality control and in maturation of the 3' terminus of the 16S rRNA. In Macrococcus caseolyticus (strain JCSC5402) (Macrococcoides caseolyticum), this protein is Endoribonuclease YbeY.